A 601-amino-acid polypeptide reads, in one-letter code: Putative pentatricopeptide repeat-containing protein At3g25060, mitochondrial (601 aa).

Residues 1 to 80 constitute a mitochondrion transit peptide; sequence MVQTKHFCML…KVFDELPQRG (80 aa). PPR repeat units lie at residues 49–79, 80–114, 115–149, 150–180, 181–215, 216–250, 251–281, 282–316, 317–347, 351–381, 382–416, 417–452, and 453–487; these read GSSISRDLIASCGRIGEISYARKVFDELPQR, GVSVYNSMIVVYSRGKNPDEVLRLYDQMIAEKIQP, DSSTFTMTIKACLSGLVLEKGEAVWCKAVDFGYKN, DVFVCSSVLNLYMKCGKMDEAEVLFGKMAKR, DVICWTTMVTGFAQAGKSLKAVEFYREMQNEGFGR, DRVVMLGLLQASGDLGDTKMGRSVHGYLYRTGLPM, NVVVETSLVDMYAKVGFIEVASRVFSRMMFK, TAVSWGSLISGFAQNGLANKAFEAVVEMQSLGFQP, DLVTLVGVLVACSQVGSLKTGRLVHCYILKR, DRVTATALMDMYSKCGALSSSREIFEHVGRK, DLVCWNTMISCYGIHGNGQEVVSLFLKMTESNIEP, DHATFASLLSALSHSGLVEQGQHWFSVMINKYKIQP, and SEKHYVCLIDLLARAGRVEEALDMINSEKLDNALP. The tract at residues 488 to 563 is type E motif; it reads IWVALLSGCI…VPGYSAIEVN (76 aa). A type E(+) motif region spans residues 564–594; the sequence is GELRTFLMEDLSHHEHYHMLQVLRNLKTEIR.

This sequence belongs to the PPR family. PCMP-E subfamily.

The protein resides in the mitochondrion. In Arabidopsis thaliana (Mouse-ear cress), this protein is Putative pentatricopeptide repeat-containing protein At3g25060, mitochondrial (PCMP-E96).